The primary structure comprises 344 residues: Golgi-associated RAB2 interactor protein 1B (344 aa).

Residues 271–293 form a disordered region; it reads FRSSRKVETNKNSSGKDSSREDS.

The protein belongs to the GARIN family.

The protein resides in the golgi apparatus. RAB2B effector protein required for accurate acrosome formation and normal male fertility. In complex with RAB2A/RAB2B, seems to suppress excessive vesicle trafficking during acrosome formation. The polypeptide is Golgi-associated RAB2 interactor protein 1B (Homo sapiens (Human)).